The sequence spans 862 residues: Alpha,alpha-trehalose-phosphate synthase [UDP-forming] 5 (862 aa).

A Phosphoserine modification is found at serine 5. A Phosphothreonine modification is found at threonine 32. The tract at residues 60-546 (DRIIIVGNQL…ARSFIQDLER (487 aa)) is glycosyltransferase.

This sequence in the N-terminal section; belongs to the glycosyltransferase 20 family. The protein in the C-terminal section; belongs to the trehalose phosphatase family. In terms of assembly, binds to the phosphopeptide-binding site of GRF/14-3-3 and to MBF1c. Both Ser-5 and Thr-32 must be phosphorylated for binding to GRF/14-3-3. As to expression, low expression in leaves, stems, flower buds, flowers and siliques.

It carries out the reaction D-glucose 6-phosphate + UDP-alpha-D-glucose = alpha,alpha-trehalose 6-phosphate + UDP + H(+). The polypeptide is Alpha,alpha-trehalose-phosphate synthase [UDP-forming] 5 (TPS5) (Arabidopsis thaliana (Mouse-ear cress)).